A 415-amino-acid polypeptide reads, in one-letter code: Glutamyl-tRNA reductase (415 aa).

Residues 49 to 52, S104, 109 to 111, and Q115 contribute to the substrate site; these read TCNR and EPQ. C50 functions as the Nucleophile in the catalytic mechanism. An NADP(+)-binding site is contributed by 184 to 189; the sequence is GAGEMI.

This sequence belongs to the glutamyl-tRNA reductase family. Homodimer.

It catalyses the reaction (S)-4-amino-5-oxopentanoate + tRNA(Glu) + NADP(+) = L-glutamyl-tRNA(Glu) + NADPH + H(+). It functions in the pathway porphyrin-containing compound metabolism; protoporphyrin-IX biosynthesis; 5-aminolevulinate from L-glutamyl-tRNA(Glu): step 1/2. In terms of biological role, catalyzes the NADPH-dependent reduction of glutamyl-tRNA(Glu) to glutamate 1-semialdehyde (GSA). This is Glutamyl-tRNA reductase from Neisseria meningitidis serogroup C / serotype 2a (strain ATCC 700532 / DSM 15464 / FAM18).